The following is a 266-amino-acid chain: Type II iodothyronine deiodinase (266 aa).

Topologically, residues 1-9 are lumenal; it reads MGLLSVDLL. A helical; Signal-anchor for type III membrane protein transmembrane segment spans residues 10–34; the sequence is ITLQILPVFFSNCLFLALYDSVILL. Over 35–266 the chain is Cytoplasmic; that stretch reads KHVALLLSRS…KNFSKRUILD (232 aa). Sec130 is an active-site residue. Non-standard amino acids (selenocysteine) are located at Sec130 and Sec263.

This sequence belongs to the iodothyronine deiodinase family. Predominantly monomer. Can form homodimers but homodimerization is not essential for enzyme activity. Interacts with USP20 and USP33. Interacts with MARCHF6. Ubiquitinated by MARCHF6, leading to its degradation by the proteasome. Deubiquitinated by USP20 and USP33. Expressed in mammary gland and in brain.

It localises to the endoplasmic reticulum membrane. It carries out the reaction 3,3',5-triiodo-L-thyronine + iodide + A + H(+) = L-thyroxine + AH2. It catalyses the reaction 3,3'-diiodo-L-thyronine + iodide + A + H(+) = 3,3',5'-triiodo-L-thyronine + AH2. The enzyme catalyses 3'-iodo-L-thyronine + iodide + A + H(+) = 3',5'-diiodo-L-thyronine + AH2. The catalysed reaction is 3,3'-diiodothyronamine + iodide + A + H(+) = 3,3',5'-triiodothyronamine + AH2. It carries out the reaction 3'-iodothyronamine + iodide + A + H(+) = 3',5'-diiodothyronamine + AH2. Its function is as follows. Plays a crucial role in the metabolism of thyroid hormones (TH) and has specific roles in TH activation and inactivation by deiodination. Catalyzes the deiodination of L-thyroxine (T4) to 3,5,3'-triiodothyronine (T3) and 3,3',5'-triiodothyronine (rT3) to 3,3'-diiodothyronine (3,3'-T2) via outer-ring deiodination (ORD). Catalyzes the deiodination of 3',5'-diiodothyronine (3',5'-T2) to 3'-monoiodothyronine (3'-T1) via ORD. Catalyzes the phenolic ring deiodinations of 3,3',5'-triiodothyronamine and 3',5'- diiodothyronamine. The sequence is that of Type II iodothyronine deiodinase (Dio2) from Mus musculus (Mouse).